The primary structure comprises 692 residues: Elongation factor G (692 aa).

A tr-type G domain is found at 8-282 (AKTRNIGIMA…AVIAYLPSPL (275 aa)). Residues 17–24 (AHVDAGKT), 81–85 (DTPGH), and 135–138 (NKMD) contribute to the GTP site.

It belongs to the TRAFAC class translation factor GTPase superfamily. Classic translation factor GTPase family. EF-G/EF-2 subfamily.

The protein resides in the cytoplasm. In terms of biological role, catalyzes the GTP-dependent ribosomal translocation step during translation elongation. During this step, the ribosome changes from the pre-translocational (PRE) to the post-translocational (POST) state as the newly formed A-site-bound peptidyl-tRNA and P-site-bound deacylated tRNA move to the P and E sites, respectively. Catalyzes the coordinated movement of the two tRNA molecules, the mRNA and conformational changes in the ribosome. The chain is Elongation factor G from Streptococcus equi subsp. zooepidemicus (strain MGCS10565).